The primary structure comprises 127 residues: Aspartate 1-decarboxylase (127 aa).

The active-site Schiff-base intermediate with substrate; via pyruvic acid is the serine 25. Serine 25 carries the post-translational modification Pyruvic acid (Ser). Position 57 (threonine 57) interacts with substrate. The active-site Proton donor is the tyrosine 58. 73–75 lines the substrate pocket; it reads GAA.

Belongs to the PanD family. Heterooctamer of four alpha and four beta subunits. It depends on pyruvate as a cofactor. Is synthesized initially as an inactive proenzyme, which is activated by self-cleavage at a specific serine bond to produce a beta-subunit with a hydroxyl group at its C-terminus and an alpha-subunit with a pyruvoyl group at its N-terminus.

It is found in the cytoplasm. The enzyme catalyses L-aspartate + H(+) = beta-alanine + CO2. It functions in the pathway cofactor biosynthesis; (R)-pantothenate biosynthesis; beta-alanine from L-aspartate: step 1/1. Functionally, catalyzes the pyruvoyl-dependent decarboxylation of aspartate to produce beta-alanine. This Bacillus pumilus (strain SAFR-032) protein is Aspartate 1-decarboxylase.